Reading from the N-terminus, the 117-residue chain is Immunoglobulin heavy variable 1-58 (117 aa).

The first 19 residues, 1–19 (MDWIWRILFLVGAATGAHS), serve as a signal peptide directing secretion. A framework-1 region spans residues 20–44 (QMQLVQSGPEVKKPGTSVKVSCKAS). The Ig-like domain occupies 20 to 117 (QMQLVQSGPE…EDTAVYYCAA (98 aa)). Cysteine 41 and cysteine 115 are joined by a disulfide. Residues 45–52 (GFTFTSSA) are complementarity-determining-1. The segment at 53-69 (VQWVRQARGQRLEWIGW) is framework-2. The segment at 70–77 (IVVGSGNT) is complementarity-determining-2. Positions 78 to 115 (NYAQKFQERVTITRDMSTSTAYMELSSLRSEDTAVYYC) are framework-3. A complementarity-determining-3 region spans residues 116-117 (AA).

Immunoglobulins are composed of two identical heavy chains and two identical light chains; disulfide-linked.

The protein resides in the secreted. It is found in the cell membrane. In terms of biological role, v region of the variable domain of immunoglobulin heavy chains that participates in the antigen recognition. Immunoglobulins, also known as antibodies, are membrane-bound or secreted glycoproteins produced by B lymphocytes. In the recognition phase of humoral immunity, the membrane-bound immunoglobulins serve as receptors which, upon binding of a specific antigen, trigger the clonal expansion and differentiation of B lymphocytes into immunoglobulins-secreting plasma cells. Secreted immunoglobulins mediate the effector phase of humoral immunity, which results in the elimination of bound antigens. The antigen binding site is formed by the variable domain of one heavy chain, together with that of its associated light chain. Thus, each immunoglobulin has two antigen binding sites with remarkable affinity for a particular antigen. The variable domains are assembled by a process called V-(D)-J rearrangement and can then be subjected to somatic hypermutations which, after exposure to antigen and selection, allow affinity maturation for a particular antigen. The protein is Immunoglobulin heavy variable 1-58 of Homo sapiens (Human).